Here is a 688-residue protein sequence, read N- to C-terminus: UvrABC system protein B (688 aa).

In terms of domain architecture, Helicase ATP-binding spans 41-429 (ANFEAGLAKQ…AGEVTELVVR (389 aa)). 54-61 (GVTGSGKT) is an ATP binding site. The short motif at 107–130 (YYDYYQPEAYVPSSDTFIEKDSSI) is the Beta-hairpin element. Residues 446 to 612 (QVDDLMSEIH…SVERPISDIM (167 aa)) form the Helicase C-terminal domain. A disordered region spans residues 616 to 646 (REDAAEKKSGKGRSKSRQVAEETPDYRAMKP). Over residues 633-645 (QVAEETPDYRAMK) the composition is skewed to basic and acidic residues. One can recognise a UVR domain in the interval 650–685 (AGKLKSLEQKMYQHAKDLEFEAAAQIRDQIQKLKTA).

It belongs to the UvrB family. As to quaternary structure, forms a heterotetramer with UvrA during the search for lesions. Interacts with UvrC in an incision complex.

It is found in the cytoplasm. In terms of biological role, the UvrABC repair system catalyzes the recognition and processing of DNA lesions. A damage recognition complex composed of 2 UvrA and 2 UvrB subunits scans DNA for abnormalities. Upon binding of the UvrA(2)B(2) complex to a putative damaged site, the DNA wraps around one UvrB monomer. DNA wrap is dependent on ATP binding by UvrB and probably causes local melting of the DNA helix, facilitating insertion of UvrB beta-hairpin between the DNA strands. Then UvrB probes one DNA strand for the presence of a lesion. If a lesion is found the UvrA subunits dissociate and the UvrB-DNA preincision complex is formed. This complex is subsequently bound by UvrC and the second UvrB is released. If no lesion is found, the DNA wraps around the other UvrB subunit that will check the other stand for damage. This Xanthomonas oryzae pv. oryzae (strain KACC10331 / KXO85) protein is UvrABC system protein B.